A 205-amino-acid chain; its full sequence is dITP/XTP pyrophosphatase (205 aa).

Position 16 to 21 (16 to 21 (TGNPGK)) interacts with substrate. The Mg(2+) site is built by Glu-48 and Asp-77. Residue Asp-77 is the Proton acceptor of the active site. Residues Ser-78, 162-165 (FGYD), Lys-185, and 190-191 (HR) each bind substrate.

Belongs to the HAM1 NTPase family. As to quaternary structure, homodimer. It depends on Mg(2+) as a cofactor.

It catalyses the reaction XTP + H2O = XMP + diphosphate + H(+). The catalysed reaction is dITP + H2O = dIMP + diphosphate + H(+). The enzyme catalyses ITP + H2O = IMP + diphosphate + H(+). Its function is as follows. Pyrophosphatase that catalyzes the hydrolysis of nucleoside triphosphates to their monophosphate derivatives, with a high preference for the non-canonical purine nucleotides XTP (xanthosine triphosphate), dITP (deoxyinosine triphosphate) and ITP. Seems to function as a house-cleaning enzyme that removes non-canonical purine nucleotides from the nucleotide pool, thus preventing their incorporation into DNA/RNA and avoiding chromosomal lesions. This chain is dITP/XTP pyrophosphatase, found in Erwinia tasmaniensis (strain DSM 17950 / CFBP 7177 / CIP 109463 / NCPPB 4357 / Et1/99).